Consider the following 142-residue polypeptide: Lysozyme X (142 aa).

Residues 1 to 19 (MRALLGICVLALVTPAVLG) form the signal peptide. The region spanning 20–142 (RTMDRCSLAR…YLPPIDDCFV (123 aa)) is the C-type lysozyme domain. Disulfide bonds link Cys25-Cys140, Cys46-Cys130, Cys81-Cys97, and Cys93-Cys111. Active-site residues include Glu51 and Asp69.

Belongs to the glycosyl hydrolase 22 family. As to expression, found in the midgut.

It catalyses the reaction Hydrolysis of (1-&gt;4)-beta-linkages between N-acetylmuramic acid and N-acetyl-D-glucosamine residues in a peptidoglycan and between N-acetyl-D-glucosamine residues in chitodextrins.. In terms of biological role, unlikely to play an active role in the humoral immune defense. May have a function in the digestion of bacteria in the food. May be involved in the clearance of bacteria from the larval gut before metamorphosis. In Drosophila melanogaster (Fruit fly), this protein is Lysozyme X (LysX).